The chain runs to 422 residues: UDP-N-acetylglucosamine 1-carboxyvinyltransferase (422 aa).

22 to 23 (KN) contributes to the phosphoenolpyruvate binding site. Residue Arg94 coordinates UDP-N-acetyl-alpha-D-glucosamine. The Proton donor role is filled by Cys118. Cys118 carries the post-translational modification 2-(S-cysteinyl)pyruvic acid O-phosphothioketal. UDP-N-acetyl-alpha-D-glucosamine contacts are provided by residues 123–127 (RPVDL), Asp309, and Ile331.

The protein belongs to the EPSP synthase family. MurA subfamily.

Its subcellular location is the cytoplasm. The enzyme catalyses phosphoenolpyruvate + UDP-N-acetyl-alpha-D-glucosamine = UDP-N-acetyl-3-O-(1-carboxyvinyl)-alpha-D-glucosamine + phosphate. It functions in the pathway cell wall biogenesis; peptidoglycan biosynthesis. Functionally, cell wall formation. Adds enolpyruvyl to UDP-N-acetylglucosamine. The sequence is that of UDP-N-acetylglucosamine 1-carboxyvinyltransferase from Cereibacter sphaeroides (strain KD131 / KCTC 12085) (Rhodobacter sphaeroides).